The chain runs to 318 residues: MKSQVQPKLIIHGGAGSSLHGKGGLEAVRQTLHAVVEEVYALLLSGVNASVAVVRGCQLLEDEPRFNAGTGSVLQSDGQIRMSASIMDGALGRFSGVINVSRVKNPIELAQFLQNSPDRVLSDYGSAELAREMQIPSYNALTELRLQEWIQERQDNFKRTMAGVIAEPELLETSNAGRGTIGVVALDTYGKLAVGTSTGGKGFERIGRVSDSAMPAGNYATSYAAVSCTGIGEDIIDECLAPKIVIRVTDGLSLQDSMQRSFAEAHDNKRDFGAIALDANGAIAWGKTCDIILAAFHDGEKIGDTLELAVGTQVGSIS.

The Nucleophile role is filled by T180. Substrate contacts are provided by residues R208–D211 and T229–G232.

It belongs to the Ntn-hydrolase family. As to quaternary structure, heterotetramer of two alpha and two beta chains arranged as a dimer of alpha/beta heterodimers. Cleaved into an alpha and beta chain by autocatalysis; this activates the enzyme. The N-terminal residue of the beta subunit is responsible for the nucleophile hydrolase activity.

The enzyme catalyses Cleavage of a beta-linked Asp residue from the N-terminus of a polypeptide.. Degrades proteins damaged by L-isoaspartyl residue formation (also known as beta-Asp residues). Probably performs the final step in the degradation of the reserve polymer cyanophycin (depolymerizes the building block L-beta-Asp-Arg). Also has L-asparaginase activity. This Nostoc sp. (strain PCC 7120 / SAG 25.82 / UTEX 2576) protein is Isoaspartyl peptidase/L-asparaginase.